The primary structure comprises 815 residues: uncharacterized protein (815 aa).

4 disordered regions span residues 123–183 (QSNT…QPST), 249–274 (NVNN…NNTN), 592–668 (IKQN…NLNS), and 765–815 (NNEE…EEIK). Polar residues-rich tracts occupy residues 135–154 (SIIT…TSTT) and 174–183 (DSITVLQPST). Over residues 595 to 611 (NGSSSSNNNSKLSSTNS) the composition is skewed to low complexity. The segment covering 612–639 (GQTSDNPINSSNGGQSIKKQGSNLSLNR) has biased composition (polar residues). Over residues 640-668 (QQSSTKLNNQSNNNNNNNANTTNQNNLNS) the composition is skewed to low complexity. A compositionally biased stretch (basic and acidic residues) spans 765–782 (NNEEHNNNNKENNNENNK). The span at 783–809 (ENINNNNNIINNNNDNNCNENNNNCNE) shows a compositional bias: low complexity.

This is an uncharacterized protein from Dictyostelium discoideum (Social amoeba).